A 737-amino-acid polypeptide reads, in one-letter code: MRKALCLTESLSAIAENSTTLLNLNRRLTGLTRSGENRNALKLFADVHRCTTLRPDQYSVSLAITTARHLRDTIFGGQVHCYAIRSGLLCHSHVSNTLLSLYERLGNLASLKKKFDEIDEPDVYSWTTLLSASFKLGDIEYAFEVFDKMPERDDVAIWNAMITGCKESGYHETSVELFREMHKLGVRHDKFGFATILSMCDYGSLDFGKQVHSLVIKAGFFIASSVVNALITMYFNCQVVVDACLVFEETDVAVRDQVTFNVVIDGLAGFKRDESLLVFRKMLEASLRPTDLTFVSVMGSCSCAAMGHQVHGLAIKTGYEKYTLVSNATMTMYSSFEDFGAAHKVFESLEEKDLVTWNTMISSYNQAKLGKSAMSVYKRMHIIGVKPDEFTFGSLLATSLDLDVLEMVQACIIKFGLSSKIEISNALISAYSKNGQIEKADLLFERSLRKNLISWNAIISGFYHNGFPFEGLERFSCLLESEVRILPDAYTLSTLLSICVSTSSLMLGSQTHAYVLRHGQFKETLIGNALINMYSQCGTIQNSLEVFNQMSEKDVVSWNSLISAYSRHGEGENAVNTYKTMQDEGKVIPDAATFSAVLSACSHAGLVEEGLEIFNSMVEFHGVIRNVDHFSCLVDLLGRAGHLDEAESLVKISEKTIGSRVDVWWALFSACAAHGDLKLGKMVAKLLMEKEKDDPSVYVQLSNIYAGAGMWKEAEETRRAINMIGAMKQRGCSWMRL.

PPR repeat units lie at residues 20 to 55, 56 to 90, 91 to 121, 122 to 152, 154 to 188, 189 to 222, 223 to 253, 256 to 289, 290 to 321, 322 to 352, 353 to 387, 388 to 418, 420 to 454, 455 to 485, 488 to 522, 523 to 553, 554 to 588, 590 to 620, and 626 to 656; these read TLLNLNRRLTGLTRSGENRNALKLFADVHRCTTLRP, DQYSVSLAITTARHLRDTIFGGQVHCYAIRSGLLC, HSHVSNTLLSLYERLGNLASLKKKFDEIDEP, DVYSWTTLLSASFKLGDIEYAFEVFDKMPER, DVAIWNAMITGCKESGYHETSVELFREMHKLGVRH, DKFGFATILSMCDYGSLDFGKQVHSLVIKAGFFI, ASSVVNALITMYFNCQVVVDACLVFEETDVA, DQVTFNVVIDGLAGFKRDESLLVFRKMLEASLRP, TDLTFVSVMGSCSCAAMGHQVHGLAIKTGYEK, YTLVSNATMTMYSSFEDFGAAHKVFESLEEK, DLVTWNTMISSYNQAKLGKSAMSVYKRMHIIGVKP, DEFTFGSLLATSLDLDVLEMVQACIIKFGLS, KIEISNALISAYSKNGQIEKADLLFERSLRKNLIS, WNAIISGFYHNGFPFEGLERFSCLLESEVRI, DAYTLSTLLSICVSTSSLMLGSQTHAYVLRHGQFK, ETLIGNALINMYSQCGTIQNSLEVFNQMSEK, DVVSWNSLISAYSRHGEGENAVNTYKTMQDEGKVI, DAATFSAVLSACSHAGLVEEGLEIFNSMVEF, and NVDHFSCLVDLLGRAGHLDEAESLVKISEKT. The type E motif; degenerate stretch occupies residues 663 to 737; sequence VWWALFSACA…KQRGCSWMRL (75 aa).

This sequence belongs to the PPR family. PCMP-E subfamily.

The protein is Pentatricopeptide repeat-containing protein At3g49740 (PCMP-E84) of Arabidopsis thaliana (Mouse-ear cress).